The primary structure comprises 1427 residues: Tonsoku-like protein (1427 aa).

Residues 1 to 21 (MTSTKEIKQLQKAKSKAQSSN) form a disordered region. The segment covering 10-21 (LQKAKSKAQSSN) has biased composition (low complexity). 8 TPR repeats span residues 27-60 (ASLC…SEIL), 67-100 (AVAN…ARSV), 107-147 (QRAL…VDER), 162-195 (ARLL…AEKN), 202-235 (YRAN…ARKM), 242-275 (SECF…GSQQ), 311-344 (LDLS…AEAL), and 352-385 (AVIH…RKGN). The disordered stretch occupies residues 465-502 (LSLDQSEDEDEEDEVDNSEPLEDSDIQYSESDDEDLEG). Acidic residues predominate over residues 469 to 501 (QSEDEDEEDEVDNSEPLEDSDIQYSESDDEDLE). 3 ANK repeats span residues 522–551 (KGET…PVNV), 555–584 (CGWT…NVND), and 591–620 (GGIT…SVTV). Disordered stretches follow at residues 692–801 (PLLR…SESG), 865–922 (KKKR…KMNQ), and 941–961 (IMTQ…QAMP). Low complexity predominate over residues 742–761 (DDSSSSDNPDSDCSLSPLRP). Over residues 773–783 (SPQEVPSSQEL) the composition is skewed to polar residues. Residues 871-880 (SEHNATRETT) are compositionally biased toward basic and acidic residues. Residues 881–890 (SRSQNNSSTI) are compositionally biased toward polar residues. The segment covering 899–910 (SCSSRGSLSLKK) has biased composition (low complexity). LRR repeat units follow at residues 1113 to 1137 (QASL…MMAA), 1141 to 1168 (MPRL…AFET), 1174 to 1197 (FPCL…ALAS), 1234 to 1258 (TGNM…VLKT), 1293 to 1316 (DCPL…LLAR), 1321 to 1346 (CPSL…LLNG), and 1377 to 1400 (SDHI…ALQQ).

It belongs to the Tonsoku family. As to quaternary structure, component of the MMS22L-TONSL complex. Binds histones, with a strong preference for histone H3.1 (histones H3.1 and H3-4/H3.1t).

Its subcellular location is the nucleus. It localises to the chromosome. The protein resides in the cytoplasm. In terms of biological role, component of the MMS22L-TONSL complex, a complex that promotes homologous recombination-mediated repair of double-strand breaks (DSBs) at stalled or collapsed replication forks. The MMS22L-TONSL complex is required to maintain genome integrity during DNA replication. It mediates the assembly of RAD51 filaments on single-stranded DNA (ssDNA): the MMS22L-TONSL complex is recruited to DSBs following histone replacement by histone chaperones and eviction of the replication protein A complex (RPA/RP-A) from DSBs. Following recruitment to DSBs, the TONSL-MMS22L complex promotes recruitment of RAD51 filaments and subsequent homologous recombination. Within the complex, TONSL acts as a histone reader, which recognizes and binds newly synthesized histones following their replacement by histone chaperones. The protein is Tonsoku-like protein (tonsl) of Danio rerio (Zebrafish).